The following is a 110-amino-acid chain: Insulin-1 (110 aa).

The N-terminal stretch at 1–24 (MALWMRFLPLLALLVLWEPKPAQA) is a signal peptide. 3 disulfide bridges follow: cysteine 31–cysteine 96, cysteine 43–cysteine 109, and cysteine 95–cysteine 100. A propeptide spans 57–87 (EVEDPQVPQLELGGGPEAGDLQTLALEVARQ) (c peptide).

It belongs to the insulin family. As to quaternary structure, heterodimer of a B chain and an A chain linked by two disulfide bonds.

It localises to the secreted. Its function is as follows. Insulin decreases blood glucose concentration. It increases cell permeability to monosaccharides, amino acids and fatty acids. It accelerates glycolysis, the pentose phosphate cycle, and glycogen synthesis in liver. This is Insulin-1 (Ins1) from Rattus norvegicus (Rat).